Consider the following 63-residue polypeptide: Male-specific sperm protein Mst84Da (63 aa).

The protein belongs to the MST(3)CGP family. Testis.

The chain is Male-specific sperm protein Mst84Da (Mst84Da) from Drosophila melanogaster (Fruit fly).